The chain runs to 349 residues: UPF0284 protein MA_3887 (349 aa).

It belongs to the UPF0284 family.

The polypeptide is UPF0284 protein MA_3887 (Methanosarcina acetivorans (strain ATCC 35395 / DSM 2834 / JCM 12185 / C2A)).